The following is a 258-amino-acid chain: UPF0246 protein VP0504 (258 aa).

Belongs to the UPF0246 family.

The protein is UPF0246 protein VP0504 of Vibrio parahaemolyticus serotype O3:K6 (strain RIMD 2210633).